The following is a 420-amino-acid chain: Glycogen synthase kinase-3 beta (420 aa).

Residues 1–22 (MSGRPRTTSFAESCKPVQQPSA) show a composition bias toward polar residues. The interval 1–53 (MSGRPRTTSFAESCKPVQQPSAFGSMKVSRDKDGSKVTTVVATPGQGPDRPQE) is disordered. Phosphoserine; by PKB/AKT1, RPS6KA3 and SGK3 is present on Ser9. Cys14 carries S-palmitoyl cysteine lipidation. The Protein kinase domain maps to 56-340 (YTDTKVIGNG…PLEACAHSFF (285 aa)). Residues 62 to 70 (IGNGSFGVV) and Lys85 each bind ATP. The Proton acceptor role is filled by Asp181. A Phosphotyrosine modification is found at Tyr216. The tract at residues 385–420 (QAAASPPANATAASDTNAGDRGQTNNAASASASNST) is disordered. Composition is skewed to low complexity over residues 386–401 (AAAS…SDTN) and 409–420 (NNAASASASNST). Residue Ser389 is modified to Phosphoserine.

This sequence belongs to the protein kinase superfamily. CMGC Ser/Thr protein kinase family. GSK-3 subfamily. As to quaternary structure, monomer. Interacts with DAB2IP (via C2 domain); the interaction stimulates GSK3B kinase activation. Interacts (via C2 domain) with PPP2CA. Interacts with CABYR, MMP2, MUC1, NIN and PRUNE1. Interacts with AXIN1; the interaction mediates hyperphosphorylation of CTNNB1 leading to its ubiquitination and destruction. Interacts with and phosphorylates SNAI1. Interacts with DNM1L (via a C-terminal domain). Interacts with ARRB2. Interacts with DISC1. Found in a complex composed of MACF1, APC, AXIN1, CTNNB1 and GSK3B. Interacts with SGK3. Interacts with the CLOCK-BMAL1 heterodimer. Interacts with ZBED3. Interacts with the BMAL1. The complex composed, at least, of APC, CTNNB1 and GSK3B interacts with JPT1; the interaction requires the inactive form of GSK3B (phosphorylated at 'Ser-9'). Forms a complex composed of PRKAR2A or PRKAR2B, GSK3B and GSKIP through GSKIP interaction; facilitates PKA-induced phosphorylation and regulates GSK3B activity. Interacts with GSKIP. Interacts with GID8. Interacts with PIWIL2. Interacts with LMBR1L. Interacts with DDX3X. Interacts with BIRC2. Interacts with TNFRSF10B; TNFRSF10B stimulation inhibits GSK3B kinase activity. Found in a complex with SLC39A6, SLC39A10 and with GSK3B that controls NCAM1 phosphorylation. Interacts with PKP3 (via ARM repeats); the interaction may be involved in PKP3 protein degradation. Post-translationally, phosphorylated by AKT1 and ILK1. Upon insulin-mediated signaling, the activated PKB/AKT1 protein kinase phosphorylates and deactivates GSK3B, resulting in the dephosphorylation and activation of GYS1. Activated by phosphorylation at Tyr-216. Phosphorylation of Ser-9 in the hippocampus peaks at CT0, whereas in the liver it peaks at CT12. Inactivated by phosphorylation at Ser-9. Phosphorylated in a circadian manner in the hippocampus. Mono-ADP-ribosylation by PARP10 negatively regulates kinase activity. In terms of processing, palmitoylated. Palmitoylation by ZDHHC4 prevents AKT1-mediated phosphorylation. In terms of tissue distribution, expressed in the liver (at protein level).

Its subcellular location is the cytoplasm. The protein localises to the nucleus. It localises to the cell membrane. It catalyses the reaction L-seryl-[tau protein] + ATP = O-phospho-L-seryl-[tau protein] + ADP + H(+). It carries out the reaction L-threonyl-[tau protein] + ATP = O-phospho-L-threonyl-[tau protein] + ADP + H(+). The catalysed reaction is L-seryl-[protein] + ATP = O-phospho-L-seryl-[protein] + ADP + H(+). The enzyme catalyses L-threonyl-[protein] + ATP = O-phospho-L-threonyl-[protein] + ADP + H(+). Its activity is regulated as follows. Activated by phosphorylation at Tyr-216. In response to insulin, inhibited by phosphorylation at Ser-9 by PKB/AKT1 and RPS6KA3; phosphorylation at this site causes a conformational change, preventing access of substrates to the active site. Inhibited by IL22 treatment which also triggers phosphorylation at Ser-9, promoting inactivation. Inhibited by lithium. Constitutively active protein kinase that acts as a negative regulator in the hormonal control of glucose homeostasis, Wnt signaling and regulation of transcription factors and microtubules, by phosphorylating and inactivating glycogen synthase (GYS1 or GYS2), EIF2B, CTNNB1/beta-catenin, APC, AXIN1, DPYSL2/CRMP2, JUN, NFATC1/NFATC, MAPT/TAU and MACF1. Requires primed phosphorylation of the majority of its substrates. In skeletal muscle, contributes to insulin regulation of glycogen synthesis by phosphorylating and inhibiting GYS1 activity and hence glycogen synthesis. May also mediate the development of insulin resistance by regulating activation of transcription factors. Regulates protein synthesis by controlling the activity of initiation factor 2B (EIF2BE/EIF2B5) in the same manner as glycogen synthase. In Wnt signaling, GSK3B forms a multimeric complex with APC, AXIN1 and CTNNB1/beta-catenin and phosphorylates the N-terminus of CTNNB1 leading to its degradation mediated by ubiquitin/proteasomes. Phosphorylates JUN at sites proximal to its DNA-binding domain, thereby reducing its affinity for DNA. Phosphorylates NFATC1/NFATC on conserved serine residues promoting NFATC1/NFATC nuclear export, shutting off NFATC1/NFATC gene regulation, and thereby opposing the action of calcineurin. Phosphorylates MAPT/TAU on 'Thr-548', decreasing significantly MAPT/TAU ability to bind and stabilize microtubules. MAPT/TAU is the principal component of neurofibrillary tangles in Alzheimer disease. Plays an important role in ERBB2-dependent stabilization of microtubules at the cell cortex. Phosphorylates MACF1, inhibiting its binding to microtubules which is critical for its role in bulge stem cell migration and skin wound repair. Probably regulates NF-kappa-B (NFKB1) at the transcriptional level and is required for the NF-kappa-B-mediated anti-apoptotic response to TNF-alpha (TNF/TNFA). Negatively regulates replication in pancreatic beta-cells, resulting in apoptosis, loss of beta-cells and diabetes. Through phosphorylation of the anti-apoptotic protein MCL1, may control cell apoptosis in response to growth factors deprivation. Phosphorylates MUC1 in breast cancer cells, decreasing the interaction of MUC1 with CTNNB1/beta-catenin. Is necessary for the establishment of neuronal polarity and axon outgrowth. Phosphorylates MARK2, leading to inhibition of its activity. Phosphorylates SIK1 at 'Thr-182', leading to sustainment of its activity. Phosphorylates ZC3HAV1 which enhances its antiviral activity. Phosphorylates SNAI1, leading to its ubiquitination and proteasomal degradation. Phosphorylates SFPQ at 'Thr-687' upon T-cell activation. Phosphorylates NR1D1 st 'Ser-55' and 'Ser-59' and stabilizes it by protecting it from proteasomal degradation. Regulates the circadian clock via phosphorylation of the major clock components including BMAL1, CLOCK and PER2. Phosphorylates CLOCK AT 'Ser-427' and targets it for proteasomal degradation. Phosphorylates BMAL1 at 'Ser-17' and 'Ser-21' and primes it for ubiquitination and proteasomal degradation. Phosphorylates FBXL2 at 'Thr-404' and primes it for ubiquitination by the SCF(FBXO3) complex and proteasomal degradation. Phosphorylates OGT at 'Ser-3' or 'Ser-4' which positively regulates its activity. Phosphorylates MYCN in neuroblastoma cells which may promote its degradation. Regulates the circadian rhythmicity of hippocampal long-term potentiation and BMAL1 and PER2 expression. Acts as a regulator of autophagy by mediating phosphorylation of KAT5/TIP60 under starvation conditions, activating KAT5/TIP60 acetyltransferase activity and promoting acetylation of key autophagy regulators, such as ULK1 and RUBCNL/Pacer. Negatively regulates extrinsic apoptotic signaling pathway via death domain receptors. Promotes the formation of an anti-apoptotic complex, made of DDX3X, BRIC2 and GSK3B, at death receptors, including TNFRSF10B. The anti-apoptotic function is most effective with weak apoptotic signals and can be overcome by stronger stimulation. Phosphorylates E2F1, promoting the interaction between E2F1 and USP11, stabilizing E2F1 and promoting its activity. Phosphorylates mTORC2 complex component RICTOR at 'Ser-1235' in response to endoplasmic stress, inhibiting mTORC2. Phosphorylates FXR1, promoting FXR1 ubiquitination by the SCF(FBXO4) complex and FXR1 degradation by the proteasome. Phosphorylates interleukin-22 receptor subunit IL22RA1, preventing its proteasomal degradation. The protein is Glycogen synthase kinase-3 beta of Mus musculus (Mouse).